A 432-amino-acid chain; its full sequence is GTPase Obg (432 aa).

One can recognise an Obg domain in the interval 1–158; sequence MFVDQIKIEV…RKLKLELKVL (158 aa). The 177-residue stretch at 159-335 folds into the OBG-type G domain; it reads ADVGLVGFPS…LTHRTADVLE (177 aa). GTP is bound by residues 165-172, 190-194, 212-215, 282-285, and 316-318; these read GFPSVGKS, FTTLV, DLPG, SKMD, and SSL. Mg(2+) is bound by residues serine 172 and threonine 192. The OCT domain maps to 354 to 432; the sequence is TFKEDEPAFK…IEDFTFEFVE (79 aa).

Belongs to the TRAFAC class OBG-HflX-like GTPase superfamily. OBG GTPase family. Monomer. Mg(2+) is required as a cofactor.

The protein resides in the cytoplasm. In terms of biological role, an essential GTPase which binds GTP, GDP and possibly (p)ppGpp with moderate affinity, with high nucleotide exchange rates and a fairly low GTP hydrolysis rate. Plays a role in control of the cell cycle, stress response, ribosome biogenesis and in those bacteria that undergo differentiation, in morphogenesis control. The chain is GTPase Obg from Ligilactobacillus salivarius (strain UCC118) (Lactobacillus salivarius).